A 142-amino-acid polypeptide reads, in one-letter code: Large ribosomal subunit protein uL11 (142 aa).

This sequence belongs to the universal ribosomal protein uL11 family. Part of the ribosomal stalk of the 50S ribosomal subunit. Interacts with L10 and the large rRNA to form the base of the stalk. L10 forms an elongated spine to which L12 dimers bind in a sequential fashion forming a multimeric L10(L12)X complex. In terms of processing, one or more lysine residues are methylated.

Forms part of the ribosomal stalk which helps the ribosome interact with GTP-bound translation factors. This is Large ribosomal subunit protein uL11 from Mycobacterium sp. (strain JLS).